A 242-amino-acid chain; its full sequence is Proteasome subunit alpha (242 aa).

Belongs to the peptidase T1A family. In terms of assembly, the 20S proteasome core is composed of 14 alpha and 14 beta subunits that assemble into four stacked heptameric rings, resulting in a barrel-shaped structure. The two inner rings, each composed of seven catalytic beta subunits, are sandwiched by two outer rings, each composed of seven alpha subunits. The catalytic chamber with the active sites is on the inside of the barrel. Has a gated structure, the ends of the cylinder being occluded by the N-termini of the alpha-subunits. Is capped by the proteasome-associated ATPase, ARC.

It is found in the cytoplasm. It functions in the pathway protein degradation; proteasomal Pup-dependent pathway. Its activity is regulated as follows. The formation of the proteasomal ATPase ARC-20S proteasome complex, likely via the docking of the C-termini of ARC into the intersubunit pockets in the alpha-rings, may trigger opening of the gate for substrate entry. Interconversion between the open-gate and close-gate conformations leads to a dynamic regulation of the 20S proteasome proteolysis activity. Component of the proteasome core, a large protease complex with broad specificity involved in protein degradation. This chain is Proteasome subunit alpha, found in Renibacterium salmoninarum (strain ATCC 33209 / DSM 20767 / JCM 11484 / NBRC 15589 / NCIMB 2235).